The sequence spans 182 residues: Isopentenyl-diphosphate Delta-isomerase (182 aa).

The Mn(2+) site is built by His-25 and His-32. The 135-residue stretch at 30 to 164 folds into the Nudix hydrolase domain; the sequence is RLHLAFSSWL…PWAFSPWMVM (135 aa). The active site involves Cys-67. Position 69 (His-69) interacts with Mn(2+). Glu-87 contributes to the Mg(2+) binding site. Residues Glu-114 and Glu-116 each coordinate Mn(2+). Glu-116 is an active-site residue.

The protein belongs to the IPP isomerase type 1 family. In terms of assembly, homodimer. Mg(2+) is required as a cofactor. Requires Mn(2+) as cofactor.

It localises to the cytoplasm. The enzyme catalyses isopentenyl diphosphate = dimethylallyl diphosphate. The protein operates within isoprenoid biosynthesis; dimethylallyl diphosphate biosynthesis; dimethylallyl diphosphate from isopentenyl diphosphate: step 1/1. Catalyzes the 1,3-allylic rearrangement of the homoallylic substrate isopentenyl (IPP) to its highly electrophilic allylic isomer, dimethylallyl diphosphate (DMAPP). The chain is Isopentenyl-diphosphate Delta-isomerase from Escherichia coli O139:H28 (strain E24377A / ETEC).